A 247-amino-acid chain; its full sequence is Myeloid leukemia factor 2 (247 aa).

The tract at residues 122–247 (ETSEMRSAPG…PSRQSRRYDW (126 aa)) is disordered. Residues 134–144 (RETRRTVRDSD) are compositionally biased toward basic and acidic residues. The segment covering 154-169 (HHIRDRAHILQRSRNH) has biased composition (basic residues). Basic and acidic residues predominate over residues 170-179 (RTGDQEERQD). A compositionally biased stretch (acidic residues) spans 182 to 192 (NLDESEAAAFD). Basic and acidic residues predominate over residues 193–225 (DEWRRETSRYRQQRPLEFRRHEASVGGGRRAEG). Residues S216, S237, and S239 each carry the phosphoserine modification.

The protein belongs to the MLF family.

The protein localises to the cytoplasm. The protein resides in the nucleus. The chain is Myeloid leukemia factor 2 (Mlf2) from Mus musculus (Mouse).